The following is a 228-amino-acid chain: Claudin-10 (228 aa).

A helical transmembrane segment spans residues Met1–Val21. The Extracellular portion of the chain corresponds to Ser22–Arg80. A helical membrane pass occupies residues Gly81 to Met101. The Cytoplasmic segment spans residues Lys102–Lys115. The chain crosses the membrane as a helical span at residues Ile116–Ser136. Topologically, residues Leu137 to Ala160 are extracellular. A helical membrane pass occupies residues Ala161 to Phe181. Topologically, residues Ser182–Val228 are cytoplasmic.

This sequence belongs to the claudin family. In terms of assembly, can form homodimers both in trans (interaction between CLDN10 molecules in opposing membranes) and in cis (interaction between CLDN10 molecules within one membrane). Interacts with CLDN19. As to expression, expressed in the kidney, eccrine sweat glands and in all layers of the epidermis. In the kidney, it is detected in the thick ascending limb of Henle's loop (TAL). In the sweat glands, it is expressed in cells from secretory portions, corresponding to the clear cells.

It localises to the cell junction. Its subcellular location is the tight junction. The protein localises to the cell membrane. The enzyme catalyses Na(+)(in) = Na(+)(out). It carries out the reaction Li(+)(in) = Li(+)(out). The catalysed reaction is K(+)(in) = K(+)(out). It catalyses the reaction Rb(+)(in) = Rb(+)(out). The enzyme catalyses Cs(+)(in) = Cs(+)(out). It carries out the reaction NH4(+)(in) = NH4(+)(out). The catalysed reaction is methylamine(out) = methylamine(in). It catalyses the reaction Mg(2+)(in) = Mg(2+)(out). The enzyme catalyses Ca(2+)(in) = Ca(2+)(out). It carries out the reaction Sr(2+)(in) = Sr(2+)(out). The catalysed reaction is chloride(in) = chloride(out). It catalyses the reaction nitrate(in) = nitrate(out). Functionally, forms paracellular channels: polymerizes in tight junction strands with cation- and anion-selective channels through the strands, conveying epithelial permeability in a process known as paracellular tight junction permeability. Forms cation-selective paracellular channels. In sweat glands and in the thick ascending limb (TAL) of Henle's loop in kidney, it controls paracellular sodium permeability which is essential for proper sweat production and renal function. In terms of biological role, forms anion-selective paracellular channels. In renal proximal tubules, it conveys selective chloride over hydrogencarbonate anion permeability which is required for renal chloride reabsorption and salt homeostasis. In Homo sapiens (Human), this protein is Claudin-10.